The chain runs to 711 residues: Myb-like protein B (711 aa).

Residues 24–50 (QPQQSIQQQQQQQQQQQQQQQQQQQQQ) are compositionally biased toward low complexity. Disordered regions lie at residues 24-70 (QPQQ…SPQL) and 113-235 (NYHT…IINN). Composition is skewed to polar residues over residues 113 to 139 (NYHT…SPPT) and 148 to 157 (TPLSSSTGFS). Composition is skewed to low complexity over residues 158 to 187 (NNNN…NNNI) and 198 to 235 (NNYP…IINN). HTH myb-type domains follow at residues 428–490 (RESI…SPEI) and 491–542 (KKGS…SRQT). 2 consecutive DNA-binding regions (H-T-H motif) follow at residues 462-486 (WKKI…KRVL) and 514-538 (WKNV…KAIM). Residues 540–598 (RQTEWNQLEDDILTKKIKLMTQNNEKISFQQVSKHLARAKTTKIPRTALECKSRWSQLN) form the Myb-like domain. Positions 598–640 (NSTNVNNNNNNNNNSITTSSSNTNQQQQSTMVTPTSSPLSSPI) are disordered.

The protein resides in the nucleus. Transcriptional activator that initiates multicellular development by induction of adenylyl cyclase expression. The chain is Myb-like protein B (mybB) from Dictyostelium discoideum (Social amoeba).